Reading from the N-terminus, the 681-residue chain is PWWP domain-containing DNA repair factor 3B (681 aa).

Residues 102–121 are compositionally biased toward polar residues; it reads NLSQESMSEEQPTATASENV. 3 disordered regions span residues 102 to 144, 166 to 200, and 285 to 304; these read NLSQ…TQED, HTTG…DDKK, and QNQS…AGCS. The residue at position 128 (Ser128) is a Phosphoserine. Polar residues predominate over residues 285–302; sequence QNQSSVESDVGAETSTAG. In terms of domain architecture, PWWP spans 377 to 438; the sequence is TGMIVWFKYQ…KKYDCKEKQA (62 aa).

This sequence belongs to the PWWP3A family.

The polypeptide is PWWP domain-containing DNA repair factor 3B (Pwwp3b) (Mus musculus (Mouse)).